A 297-amino-acid chain; its full sequence is UDP-N-acetylenolpyruvoylglucosamine reductase (297 aa).

Positions 22-195 constitute an FAD-binding PCMH-type domain; that stretch reads RVGGPAQYYA…LAGRFRLHRA (174 aa). The active site involves R169. S223 serves as the catalytic Proton donor. E293 is an active-site residue.

Belongs to the MurB family. It depends on FAD as a cofactor.

It localises to the cytoplasm. It carries out the reaction UDP-N-acetyl-alpha-D-muramate + NADP(+) = UDP-N-acetyl-3-O-(1-carboxyvinyl)-alpha-D-glucosamine + NADPH + H(+). It functions in the pathway cell wall biogenesis; peptidoglycan biosynthesis. Functionally, cell wall formation. The polypeptide is UDP-N-acetylenolpyruvoylglucosamine reductase (Chloroflexus aggregans (strain MD-66 / DSM 9485)).